The primary structure comprises 71 residues: Large ribosomal subunit protein bL31 (71 aa).

Positions 16, 18, 36, and 39 each coordinate Zn(2+).

The protein belongs to the bacterial ribosomal protein bL31 family. Type A subfamily. As to quaternary structure, part of the 50S ribosomal subunit. Requires Zn(2+) as cofactor.

Binds the 23S rRNA. The chain is Large ribosomal subunit protein bL31 from Thermotoga sp. (strain RQ2).